The following is a 527-amino-acid chain: Probable malate:quinone oxidoreductase (527 aa).

Belongs to the MQO family. FAD is required as a cofactor.

The catalysed reaction is (S)-malate + a quinone = a quinol + oxaloacetate. The protein operates within carbohydrate metabolism; tricarboxylic acid cycle; oxaloacetate from (S)-malate (quinone route): step 1/1. In Pectobacterium atrosepticum (strain SCRI 1043 / ATCC BAA-672) (Erwinia carotovora subsp. atroseptica), this protein is Probable malate:quinone oxidoreductase.